We begin with the raw amino-acid sequence, 89 residues long: MALSTAEKKQILAEYGLHDSDTGSAEAQVALLTKRIIGLTEHLKQHKHDHHSRRGLLLMVGRRRRLLNYLTKVDIERYRSLIQRLGLRR.

The protein belongs to the universal ribosomal protein uS15 family. Part of the 30S ribosomal subunit. Forms a bridge to the 50S subunit in the 70S ribosome, contacting the 23S rRNA.

Functionally, one of the primary rRNA binding proteins, it binds directly to 16S rRNA where it helps nucleate assembly of the platform of the 30S subunit by binding and bridging several RNA helices of the 16S rRNA. Its function is as follows. Forms an intersubunit bridge (bridge B4) with the 23S rRNA of the 50S subunit in the ribosome. The chain is Small ribosomal subunit protein uS15 from Saccharopolyspora erythraea (strain ATCC 11635 / DSM 40517 / JCM 4748 / NBRC 13426 / NCIMB 8594 / NRRL 2338).